A 268-amino-acid chain; its full sequence is Protein APE_1980.1 (268 aa).

Belongs to the CinA family.

This is Protein APE_1980.1 from Aeropyrum pernix (strain ATCC 700893 / DSM 11879 / JCM 9820 / NBRC 100138 / K1).